The sequence spans 473 residues: Arginine biosynthesis bifunctional protein ArgJ, mitochondrial (473 aa).

Substrate is bound by residues threonine 201, lysine 230, threonine 241, glutamate 328, asparagine 468, and threonine 473. Threonine 241 acts as the Nucleophile in catalysis.

It belongs to the ArgJ family. Heterodimer of an alpha and a beta chain. In terms of processing, the alpha and beta chains are autoproteolytically processed from a single precursor protein within the mitochondrion.

The protein localises to the mitochondrion matrix. The catalysed reaction is N(2)-acetyl-L-ornithine + L-glutamate = N-acetyl-L-glutamate + L-ornithine. It catalyses the reaction L-glutamate + acetyl-CoA = N-acetyl-L-glutamate + CoA + H(+). Its pathway is amino-acid biosynthesis; L-arginine biosynthesis; L-ornithine and N-acetyl-L-glutamate from L-glutamate and N(2)-acetyl-L-ornithine (cyclic): step 1/1. It functions in the pathway amino-acid biosynthesis; L-arginine biosynthesis; N(2)-acetyl-L-ornithine from L-glutamate: step 1/4. Its function is as follows. Catalyzes two activities which are involved in the cyclic version of arginine biosynthesis: the synthesis of acetylglutamate from glutamate and acetyl-CoA, and of ornithine by transacetylation between acetylornithine and glutamate. This Blastomyces gilchristii (strain SLH14081) (Blastomyces dermatitidis) protein is Arginine biosynthesis bifunctional protein ArgJ, mitochondrial.